The primary structure comprises 832 residues: Protein P (832 aa).

The interval 1–177 (MPLSYQHFRK…FCGSPYSWEQ (177 aa)) is terminal protein domain (TP). Residues 178–335 (ELQHGAESFH…YCLSHIVNLL (158 aa)) form a spacer region. The span at 186–206 (FHQQSSGILSRPSVGSSLQSK) shows a compositional bias: polar residues. Disordered regions lie at residues 186–255 (FHQQ…GHNA) and 280–305 (TSENHSSSGHAVELHNLPPNSARSQS). A compositionally biased stretch (low complexity) spans 210–220 (SRLGLQSQQGH). A polymerase/reverse transcriptase domain (RT) region spans residues 336–679 (EDWGPCAEHG…YLNLYPVARQ (344 aa)). The 244-residue stretch at 346–589 (EHHIRIPRTP…YSLNFMGYVI (244 aa)) folds into the Reverse transcriptase domain. Residues Asp418, Asp540, and Asp541 each contribute to the Mg(2+) site.

The protein belongs to the hepadnaviridae P protein family.

The enzyme catalyses DNA(n) + a 2'-deoxyribonucleoside 5'-triphosphate = DNA(n+1) + diphosphate. The catalysed reaction is Endonucleolytic cleavage to 5'-phosphomonoester.. Its activity is regulated as follows. Activated by host HSP70 and HSP40 in vitro to be able to bind the epsilon loop of the pgRNA. Because deletion of the RNase H region renders the protein partly chaperone-independent, the chaperones may be needed indirectly to relieve occlusion of the RNA-binding site by this domain. Inhibited by several reverse-transcriptase inhibitors: Lamivudine, Adefovir and Entecavir. In terms of biological role, multifunctional enzyme that converts the viral RNA genome into dsDNA in viral cytoplasmic capsids. This enzyme displays a DNA polymerase activity that can copy either DNA or RNA templates, and a ribonuclease H (RNase H) activity that cleaves the RNA strand of RNA-DNA heteroduplexes in a partially processive 3'- to 5'-endonucleasic mode. Neo-synthesized pregenomic RNA (pgRNA) are encapsidated together with the P protein, and reverse-transcribed inside the nucleocapsid. Initiation of reverse-transcription occurs first by binding the epsilon loop on the pgRNA genome, and is initiated by protein priming, thereby the 5'-end of (-)DNA is covalently linked to P protein. Partial (+)DNA is synthesized from the (-)DNA template and generates the relaxed circular DNA (RC-DNA) genome. After budding and infection, the RC-DNA migrates in the nucleus, and is converted into a plasmid-like covalently closed circular DNA (cccDNA). The activity of P protein does not seem to be necessary for cccDNA generation, and is presumably released from (+)DNA by host nuclear DNA repair machinery. The polypeptide is Protein P (Hepatitis B virus genotype D subtype ayw (isolate Australia/AustKW/1991) (HBV-D)).